The chain runs to 210 residues: Syntaxin-binding protein 6 (210 aa).

At S2 the chain carries N-acetylserine. The v-SNARE coiled-coil homology domain occupies 151–210 (GNSILHSAADSVTSAVQKASQALNERGERLGRAEEKTEDLKNSAQQFAETAHKLAMKHKC).

Part of a ternary complex containing SNAP25 and STX1A that can be dissociated by NAPA and NSF. Interacts with STX4A.

The protein resides in the cytoplasm. It is found in the membrane. Forms non-fusogenic complexes with SNAP25 and STX1A and may thereby modulate the formation of functional SNARE complexes and exocytosis. This chain is Syntaxin-binding protein 6 (STXBP6), found in Bos taurus (Bovine).